Consider the following 116-residue polypeptide: Iron-sulfur cluster insertion protein ErpA (116 aa).

Positions 44, 108, and 110 each coordinate iron-sulfur cluster.

The protein belongs to the HesB/IscA family. As to quaternary structure, homodimer. Iron-sulfur cluster serves as cofactor.

Required for insertion of 4Fe-4S clusters for at least IspG. The polypeptide is Iron-sulfur cluster insertion protein ErpA (Shewanella sp. (strain ANA-3)).